The sequence spans 560 residues: Choline/ethanolamine transporter FLVCR1 (560 aa).

A disordered region spans residues 1–22 (MVKLNDEEGAAMAPGHQPTNGY). Residues 1 to 99 (MVKLNDEEGA…TPGTEGSPAP (99 aa)) lie on the Cytoplasmic side of the membrane. S56 carries the post-translational modification Phosphoserine. The disordered stretch occupies residues 68–99 (QTPLAPEEETQTRLLPTGPGEETPGTEGSPAP). The span at 83–95 (PTGPGEETPGTEG) shows a compositional bias: low complexity. The helical transmembrane segment at 100–124 (QTALSARRFVVLLIFSLYSLVNAFQ) threads the bilayer. At 125 to 142 (WIQYSVISNVFEGFYGVS) the chain is on the extracellular side. A helical transmembrane segment spans residues 143–170 (SLHIDWLSMVYMLAYVPLIFPATWLLDT). Residues 171-172 (RG) are Cytoplasmic-facing. A helical transmembrane segment spans residues 173-192 (LRLTALLGSGLNCLGAWVKC). Topologically, residues 193–199 (ASVQQHL) are extracellular. Residues 200–228 (FWVTMLGQCLCSVAQVFILGLPSRIASVW) form a helical membrane-spanning segment. Q214 is an ethanolamine binding site. Over 229 to 233 (FGPKE) the chain is Cytoplasmic. A helical membrane pass occupies residues 234–259 (VSTACATAVLGNQLGAAIGFLLPPVL). The Extracellular segment spans residues 260-265 (VPNTQN). N265 carries an N-linked (GlcNAc...) asparagine glycan. The helical transmembrane segment at 266–295 (NTDLLACNISTMFYGTSSVATFLCFLTIIA) threads the bilayer. The Cytoplasmic portion of the chain corresponds to 296 to 331 (FKEKPQYPPSQAQAALQNSPPAKYSYKKSIRNLFRN). A helical transmembrane segment spans residues 332–362 (VPFVLLLITYGIITGAFYSVSTLLNQMILTY). The Extracellular segment spans residues 363–366 (YKGE). Residues 367–395 (EVSAGKIGLTLVVAGMVGSILCGFWLDYT) traverse the membrane as a helical segment. Residues 396–397 (KI) lie on the Cytoplasmic side of the membrane. Residues 398–420 (YKQTTLIVYILSFLGMVIFTFTL) form a helical membrane-spanning segment. Residues 421-423 (DLG) lie on the Extracellular side of the membrane. The helical transmembrane segment at 424 to 453 (YGIVVFVTGGVLGFFMTGYLPLGFEFAVEI) threads the bilayer. The Cytoplasmic segment spans residues 454-461 (TYPESEGT). The helical transmembrane segment at 462 to 487 (SSGLLNAAAQIFGILFTLAQGKLTTD) threads the bilayer. Q471 is a binding site for ethanolamine. Position 471 (Q471) interacts with choline. The Extracellular segment spans residues 488-489 (YS). Residues 490-512 (PKAGNIFLCVWLFLGIILTALIK) form a helical membrane-spanning segment. Residues 513–560 (SDLRRHNINIGIANGDIKAVPVEDTVEDSPTDKESKTIVMSKQSESAI) lie on the Cytoplasmic side of the membrane. Positions 537–560 (TVEDSPTDKESKTIVMSKQSESAI) are disordered. S541 carries the phosphoserine modification. Polar residues predominate over residues 550–560 (IVMSKQSESAI).

The protein belongs to the major facilitator superfamily. Feline leukemia virus subgroup C receptor (TC 2.A.1.28.1) family.

It localises to the cell membrane. The enzyme catalyses choline(out) = choline(in). It carries out the reaction ethanolamine(in) = ethanolamine(out). It catalyses the reaction heme b(in) = heme b(out). Its function is as follows. Uniporter that mediates the transport of extracellular choline and ethanolamine into cells, thereby playing a key role in phospholipid biosynthesis. Choline and ethanolamine are the precursors of phosphatidylcholine and phosphatidylethanolamine, respectively, the two most abundant phospholipids. Transport is not coupled with proton transport and is exclusively driven by the choline (or ethanolamine) gradient across the plasma membrane. Also acts as a heme b transporter that mediates heme efflux from the cytoplasm to the extracellular compartment. In terms of biological role, (Microbial infection) Confers susceptibility to Feline leukemia virus subgroup C (FeLV-C) infection, which is associated with fatal erythroid aplasia, also known as aplastic anemia. In Felis catus (Cat), this protein is Choline/ethanolamine transporter FLVCR1 (FLVCR1).